A 701-amino-acid polypeptide reads, in one-letter code: Elongation factor G (701 aa).

The tr-type G domain occupies 8–290 (ERYRNIGISA…AVVDYLPAPT (283 aa)). Residues 17–24 (AHIDAGKT), 88–92 (DTPGH), and 142–145 (NKMD) contribute to the GTP site.

The protein belongs to the TRAFAC class translation factor GTPase superfamily. Classic translation factor GTPase family. EF-G/EF-2 subfamily.

It is found in the cytoplasm. In terms of biological role, catalyzes the GTP-dependent ribosomal translocation step during translation elongation. During this step, the ribosome changes from the pre-translocational (PRE) to the post-translocational (POST) state as the newly formed A-site-bound peptidyl-tRNA and P-site-bound deacylated tRNA move to the P and E sites, respectively. Catalyzes the coordinated movement of the two tRNA molecules, the mRNA and conformational changes in the ribosome. This is Elongation factor G from Aeromonas salmonicida (strain A449).